The chain runs to 1055 residues: DIS3-like exonuclease 2 (1055 aa).

Disordered regions lie at residues 1-109 (MKSA…SSPE) and 229-249 (SAAK…KARQ). The span at 17–32 (HKKKRNRPQKQNRRSK) shows a compositional bias: basic residues. Residues 39–59 (EDAHVEESLDGRDSSRSKAKD) show a composition bias toward basic and acidic residues. The span at 97–108 (PRRSASPLLSSP) shows a compositional bias: low complexity. Mg(2+)-binding residues include Asp-488 and Asp-497.

The protein belongs to the RNR ribonuclease family. DIS3L2 subfamily. The cofactor is Mg(2+). Requires Mn(2+) as cofactor. As to expression, widely expressed.

Its subcellular location is the cytoplasm. The protein localises to the P-body. In terms of biological role, 3'-5'-exoribonuclease that specifically recognizes RNAs polyuridylated at their 3' end and mediates their degradation. Component of an exosome-independent RNA degradation pathway that mediates degradation of cytoplasmic mRNAs that have been deadenylated and subsequently uridylated at their 3'. This is DIS3-like exonuclease 2 (SOV) from Arabidopsis thaliana (Mouse-ear cress).